A 211-amino-acid polypeptide reads, in one-letter code: FMN-dependent NADH:quinone oxidoreductase 3 (211 aa).

102 to 105 (MWNF) lines the FMN pocket.

The protein belongs to the azoreductase type 1 family. In terms of assembly, homodimer. Requires FMN as cofactor.

The enzyme catalyses 2 a quinone + NADH + H(+) = 2 a 1,4-benzosemiquinone + NAD(+). The catalysed reaction is N,N-dimethyl-1,4-phenylenediamine + anthranilate + 2 NAD(+) = 2-(4-dimethylaminophenyl)diazenylbenzoate + 2 NADH + 2 H(+). Its function is as follows. Quinone reductase that provides resistance to thiol-specific stress caused by electrophilic quinones. In terms of biological role, also exhibits azoreductase activity. Catalyzes the reductive cleavage of the azo bond in aromatic azo compounds to the corresponding amines. The chain is FMN-dependent NADH:quinone oxidoreductase 3 from Bacillus cereus (strain ZK / E33L).